The chain runs to 253 residues: HTH-type transcriptional regulator YdeO (253 aa).

One can recognise an HTH araC/xylS-type domain in the interval 137–233 (GKVRNIVNMK…GNSPKRVSKE (97 aa)). 2 consecutive DNA-binding regions (H-T-H motif) follow at residues 154 to 175 (KDICDCLYISESLLKKKLKQEQ) and 200 to 223 (VNKIAEQCGYASTSYFIYAFRKHF).

Functionally, induces the expression of gadE and mdtEF. Could also regulate the expression of other genes involved in acid resistance. The protein is HTH-type transcriptional regulator YdeO (ydeO) of Escherichia coli O6:H1 (strain CFT073 / ATCC 700928 / UPEC).